Reading from the N-terminus, the 187-residue chain is MANYSTSEFKSGLKILMDGDPYAIIENEFVKPGKGQAFNRVKVRNLKTGRVLEKTFKSGDSVEAADVMDTNMQYLYTDGEFWHFMVPDTFEQHAAGEAAVADAIKWLKEQDMCVVTLWNGVPLAVSPPNFVELTITQCDPGVRGDTAQGGTKPATLETGAVVKVPLFVEEGEKVRVDTRTGEYVSRV.

Residue Lys-34 is modified to N6-(3,6-diaminohexanoyl)-5-hydroxylysine.

This sequence belongs to the elongation factor P family. In terms of processing, may be beta-lysylated on the epsilon-amino group of Lys-34 by the combined action of EpmA and EpmB, and then hydroxylated on the C5 position of the same residue by EpmC (if this protein is present). Lysylation is critical for the stimulatory effect of EF-P on peptide-bond formation. The lysylation moiety may extend toward the peptidyltransferase center and stabilize the terminal 3-CCA end of the tRNA. Hydroxylation of the C5 position on Lys-34 may allow additional potential stabilizing hydrogen-bond interactions with the P-tRNA.

Its subcellular location is the cytoplasm. It participates in protein biosynthesis; polypeptide chain elongation. Its function is as follows. Involved in peptide bond synthesis. Alleviates ribosome stalling that occurs when 3 or more consecutive Pro residues or the sequence PPG is present in a protein, possibly by augmenting the peptidyl transferase activity of the ribosome. Modification of Lys-34 is required for alleviation. This chain is Elongation factor P, found in Thioalkalivibrio sulfidiphilus (strain HL-EbGR7).